Reading from the N-terminus, the 87-residue chain is LYR motif-containing protein 2 (87 aa).

Residues 1-19 (MGSRLPPAALTLKQFLVRQ) constitute a mitochondrion transit peptide.

It belongs to the complex I LYR family.

The protein resides in the mitochondrion. Involved in efficient integration of the N-module into mitochondrial respiratory chain complex I. In Xenopus laevis (African clawed frog), this protein is LYR motif-containing protein 2 (lyrm2).